Consider the following 694-residue polypeptide: Elongation factor G (694 aa).

The tr-type G domain occupies 9-288 (DAIRNIGIMA…VIVKWLPSPL (280 aa)). GTP contacts are provided by residues 18–25 (AHIDAGKT), 82–86 (DTPGH), and 136–139 (NKMD).

This sequence belongs to the TRAFAC class translation factor GTPase superfamily. Classic translation factor GTPase family. EF-G/EF-2 subfamily.

The protein resides in the cytoplasm. Functionally, catalyzes the GTP-dependent ribosomal translocation step during translation elongation. During this step, the ribosome changes from the pre-translocational (PRE) to the post-translocational (POST) state as the newly formed A-site-bound peptidyl-tRNA and P-site-bound deacylated tRNA move to the P and E sites, respectively. Catalyzes the coordinated movement of the two tRNA molecules, the mRNA and conformational changes in the ribosome. This Chlamydia trachomatis serovar L2 (strain ATCC VR-902B / DSM 19102 / 434/Bu) protein is Elongation factor G.